A 775-amino-acid chain; its full sequence is Venom dipeptidyl peptidase 4 (775 aa).

The signal sequence occupies residues 1–23; it reads MEVLVQLALLLVVHGSLVVLVAG. N-linked (GlcNAc...) asparagine glycans are attached at residues N68 and N239. Disulfide bonds link C450-C453 and C463-C481. 4 N-linked (GlcNAc...) asparagine glycosylation sites follow: N473, N505, N578, and N631. The active-site Charge relay system is the S639. Residues C659 and C770 are joined by a disulfide bond. N-linked (GlcNAc...) asparagine glycosylation is found at N689 and N694. Residues D718 and H750 each act as charge relay system in the active site.

This sequence belongs to the peptidase S9B family. DPPIV subfamily. Expressed by the venom duct.

It is found in the secreted. It catalyses the reaction Release of an N-terminal dipeptide, Xaa-Yaa-|-Zaa-, from a polypeptide, preferentially when Yaa is Pro, provided Zaa is neither Pro nor hydroxyproline.. With respect to regulation, inhibited by diprotin A. Functionally, venom dipeptidyl-peptidase which removes N-terminal dipeptides sequentially from polypeptides having unsubstituted N-termini provided that the penultimate residue is proline. May process promelittin into its active form and/or modulate the chemotactic activity of immune cells after the insect sting. This Apis mellifera (Honeybee) protein is Venom dipeptidyl peptidase 4.